Here is a 419-residue protein sequence, read N- to C-terminus: UDP-N-acetylglucosamine 1-carboxyvinyltransferase (419 aa).

22-23 (KN) is a phosphoenolpyruvate binding site. UDP-N-acetyl-alpha-D-glucosamine is bound at residue arginine 91. Residue cysteine 115 is the Proton donor of the active site. Cysteine 115 carries the 2-(S-cysteinyl)pyruvic acid O-phosphothioketal modification. Residues 120-124 (RPVDL), 160-163 (KVSV), aspartate 305, and isoleucine 327 each bind UDP-N-acetyl-alpha-D-glucosamine.

It belongs to the EPSP synthase family. MurA subfamily.

Its subcellular location is the cytoplasm. The catalysed reaction is phosphoenolpyruvate + UDP-N-acetyl-alpha-D-glucosamine = UDP-N-acetyl-3-O-(1-carboxyvinyl)-alpha-D-glucosamine + phosphate. The protein operates within cell wall biogenesis; peptidoglycan biosynthesis. Cell wall formation. Adds enolpyruvyl to UDP-N-acetylglucosamine. This is UDP-N-acetylglucosamine 1-carboxyvinyltransferase from Sodalis glossinidius (strain morsitans).